The following is a 93-amino-acid chain: Em protein H2 (93 aa).

A disordered region spans residues 1–93 (MASGQQERSQ…IDESKFKTKS (93 aa)). Basic and acidic residues-rich tracts occupy residues 9 to 19 (SQLDRKAREGE), 31 to 52 (LEAH…REQM), and 73 to 93 (GGER…KTKS).

Belongs to the small hydrophilic plant seed protein family.

In terms of biological role, it is thought to provide protection for the cytoplasm during the desiccation stage of embryo development. This is Em protein H2 (EMH2) from Triticum aestivum (Wheat).